The primary structure comprises 258 residues: Type II restriction enzyme HindII (258 aa).

It carries out the reaction Endonucleolytic cleavage of DNA to give specific double-stranded fragments with terminal 5'-phosphates.. A P subtype restriction enzyme that recognizes the double-stranded sequence 5'-GTYRAC-3' and cleaves after Y-3. This is Type II restriction enzyme HindII (hindIIR) from Haemophilus influenzae (strain ATCC 51907 / DSM 11121 / KW20 / Rd).